A 58-amino-acid chain; its full sequence is Birtoxin (58 aa).

The 56-residue stretch at 3–58 (VPGNYPLDKDGNTYKCFLLGGNEECLNVCKLHGVQYGYCYASKCWCEYLEDDKDSV) folds into the LCN-type CS-alpha/beta domain. 3 disulfide bridges follow: cysteine 18–cysteine 41, cysteine 27–cysteine 46, and cysteine 31–cysteine 48.

In terms of tissue distribution, expressed by the venom gland.

The protein localises to the secreted. Its function is as follows. Beta toxins bind voltage-independently at site-4 of sodium channels (Nav) and shift the voltage of activation toward more negative potentials thereby affecting sodium channel activation and promoting spontaneous and repetitive firing. Moderately toxic, but very high abundant. Does not target reptilian channels. Does not produce effect when administered to blowfly and cabbage looper larvae. In mice, produces convulsions, tremors, increased ventilation and, subsequently, death. This chain is Birtoxin, found in Parabuthus transvaalicus (Transvaal thick-tailed scorpion).